The following is a 371-amino-acid chain: Queuine tRNA-ribosyltransferase (371 aa).

Residue D90 is the Proton acceptor of the active site. Residues 90–94, D144, Q189, and G215 contribute to the substrate site; that span reads DSGGF. The interval 246-252 is RNA binding; sequence GVGTPEN. D265 serves as the catalytic Nucleophile. Residues 270–274 are RNA binding; important for wobble base 34 recognition; that stretch reads TRNAR. Zn(2+)-binding residues include C303, C305, C308, and H334.

It belongs to the queuine tRNA-ribosyltransferase family. As to quaternary structure, homodimer. Within each dimer, one monomer is responsible for RNA recognition and catalysis, while the other monomer binds to the replacement base PreQ1. The cofactor is Zn(2+).

The enzyme catalyses 7-aminomethyl-7-carbaguanine + guanosine(34) in tRNA = 7-aminomethyl-7-carbaguanosine(34) in tRNA + guanine. The protein operates within tRNA modification; tRNA-queuosine biosynthesis. Functionally, catalyzes the base-exchange of a guanine (G) residue with the queuine precursor 7-aminomethyl-7-deazaguanine (PreQ1) at position 34 (anticodon wobble position) in tRNAs with GU(N) anticodons (tRNA-Asp, -Asn, -His and -Tyr). Catalysis occurs through a double-displacement mechanism. The nucleophile active site attacks the C1' of nucleotide 34 to detach the guanine base from the RNA, forming a covalent enzyme-RNA intermediate. The proton acceptor active site deprotonates the incoming PreQ1, allowing a nucleophilic attack on the C1' of the ribose to form the product. After dissociation, two additional enzymatic reactions on the tRNA convert PreQ1 to queuine (Q), resulting in the hypermodified nucleoside queuosine (7-(((4,5-cis-dihydroxy-2-cyclopenten-1-yl)amino)methyl)-7-deazaguanosine). The chain is Queuine tRNA-ribosyltransferase from Helicobacter pylori (strain G27).